The chain runs to 644 residues: 3D-(3,5/4)-trihydroxycyclohexane-1,2-dione hydrolase (644 aa).

Position 65 (glutamate 65) interacts with thiamine diphosphate. The tract at residues 442–522 (SLPGDLQRMW…INVLLFDNSG (81 aa)) is thiamine pyrophosphate binding. 2 residues coordinate Mg(2+): aspartate 493 and asparagine 520.

It belongs to the TPP enzyme family. Requires Mg(2+) as cofactor. Thiamine diphosphate serves as cofactor.

The catalysed reaction is 3D-3,5/4-trihydroxycyclohexane-1,2-dione + H2O = 5-deoxy-D-glucuronate + H(+). It participates in polyol metabolism; myo-inositol degradation into acetyl-CoA; acetyl-CoA from myo-inositol: step 3/7. Functionally, involved in the cleavage of the C1-C2 bond of 3D-(3,5/4)-trihydroxycyclohexane-1,2-dione (THcHDO) to yield 5-deoxy-glucuronate (5DG). In Bacillus cereus (strain AH820), this protein is 3D-(3,5/4)-trihydroxycyclohexane-1,2-dione hydrolase.